The sequence spans 293 residues: Protein YIF1A (293 aa).

Positions 1 to 33 (MAYHSGYGAHGSKHRARAAPDPPPLFDDTSGGY) are disordered. Position 2 is an N-acetylalanine (alanine 2). Over 2 to 138 (AYHSGYGAHG…PPRQDLNAPD (137 aa)) the chain is Cytoplasmic. At serine 12 the chain carries Phosphoserine. Residues 139–159 (LYIPTMAFITYVLLAGMALGI) traverse the membrane as a helical segment. At 160 to 174 (QKRFSPEVLGLCAST) the chain is on the lumenal side. The chain crosses the membrane as a helical span at residues 175 to 195 (ALVWVVMEVLALLLGLYLATV). Residues 196-203 (RSDLSTFH) are Cytoplasmic-facing. Residues 204 to 226 (LLAYSGYKYVGMILSVLTGLLFG) traverse the membrane as a helical segment. The Lumenal segment spans residues 227–229 (SDG). The chain crosses the membrane as a helical span at residues 230–249 (YYVALAWTSSALMYFIVRSL). The Cytoplasmic portion of the chain corresponds to 250–271 (RTAALGPDSMGGPVPRQRLQLY). Residues 272–292 (LTLGAAAFQPLIIYWLTFHLV) traverse the membrane as a helical segment.

Belongs to the YIF1 family. In terms of assembly, interacts with YIPF5.

It is found in the endoplasmic reticulum membrane. It localises to the golgi apparatus membrane. The protein resides in the endoplasmic reticulum-Golgi intermediate compartment membrane. In terms of biological role, possible role in transport between endoplasmic reticulum and Golgi. In Homo sapiens (Human), this protein is Protein YIF1A (YIF1A).